The chain runs to 547 residues: Chaperonin GroEL (547 aa).

ATP contacts are provided by residues 30 to 33, K51, 87 to 91, G415, and D495; these read TLGP and DGTTT. A disordered region spans residues 526–547; sequence KKDTPVPPMPGGGMGGMGGMDF. Residues 536-547 show a composition bias toward gly residues; that stretch reads GGGMGGMGGMDF.

This sequence belongs to the chaperonin (HSP60) family. Forms a cylinder of 14 subunits composed of two heptameric rings stacked back-to-back. Interacts with the co-chaperonin GroES.

It is found in the cytoplasm. It carries out the reaction ATP + H2O + a folded polypeptide = ADP + phosphate + an unfolded polypeptide.. Its function is as follows. Together with its co-chaperonin GroES, plays an essential role in assisting protein folding. The GroEL-GroES system forms a nano-cage that allows encapsulation of the non-native substrate proteins and provides a physical environment optimized to promote and accelerate protein folding. This is Chaperonin GroEL from Bartonella henselae (strain ATCC 49882 / DSM 28221 / CCUG 30454 / Houston 1) (Rochalimaea henselae).